A 611-amino-acid polypeptide reads, in one-letter code: Alpha-1,2-mannosyltransferase ALG9 (611 aa).

The segment covering 1 to 10 (MASRRARQRL) has biased composition (basic residues). The segment at 1 to 51 (MASRRARQRLKGGGGGGGGGGDAGPAAEKLEQLGSREAGAEPRPESGNKAG) is disordered. Over 1–135 (MASRRARQRL…FHARILQTNK (135 aa)) the chain is Lumenal. Residues 11-23 (KGGGGGGGGGGDA) show a composition bias toward gly residues. The N-linked (GlcNAc...) asparagine glycan is linked to asparagine 77. The chain crosses the membrane as a helical span at residues 136–156 (ILVFYFLRCLLAFVSCVCELY). Topologically, residues 157–171 (FYKAVCKKFGLHVSR) are cytoplasmic. The helical transmembrane segment at 172–192 (MMLAFLVLSTGMFCSSSAFLP) threads the bilayer. Residues 193-213 (SSFCMYTTLIAMTGWYMDKTP) are Lumenal-facing. A helical membrane pass occupies residues 214-234 (IAVLGVAAGAILGWPFSAALG). At 235-249 (LPIAFDLLARKHRWK) the chain is on the cytoplasmic side. A helical membrane pass occupies residues 250–270 (SFLLWSLVALALFLVPVVVID). At 271 to 310 (SYYYGKLVVAPLNIVLYNVFTSHGPDLYGTEPWYFYLING) the chain is on the lumenal side. The chain crosses the membrane as a helical span at residues 311-331 (FLNFNVAFALALLVLPLTFLM). The Cytoplasmic portion of the chain corresponds to 332 to 342 (EYLLQRFHVQN). The helical transmembrane segment at 343–363 (LGHPYWLTLAPMYIWFIIFFI) threads the bilayer. Topologically, residues 364–370 (QPHKEER) are lumenal. Residues 371-391 (FLFPVYPLICLCGAVALSALQ) form a helical membrane-spanning segment. Residues 392 to 405 (KCYHFVFQRYRLEH) lie on the Cytoplasmic side of the membrane. The helical transmembrane segment at 406–426 (YTVTSNWLALGTVFLFGLLSF) threads the bilayer. Topologically, residues 427 to 611 (SRSVALFRGY…AKPSRKKSGG (185 aa)) are lumenal. Residues asparagine 550 and asparagine 593 are each glycosylated (N-linked (GlcNAc...) asparagine).

The protein belongs to the glycosyltransferase 22 family.

Its subcellular location is the endoplasmic reticulum membrane. It catalyses the reaction an alpha-D-Man-(1-&gt;2)-alpha-D-Man-(1-&gt;2)-alpha-D-Man-(1-&gt;3)-[alpha-D-Man-(1-&gt;3)-alpha-D-Man-(1-&gt;6)]-beta-D-Man-(1-&gt;4)-beta-D-GlcNAc-(1-&gt;4)-alpha-D-GlcNAc-diphospho-di-trans,poly-cis-dolichol + a di-trans,poly-cis-dolichyl beta-D-mannosyl phosphate = an alpha-D-Man-(1-&gt;2)-alpha-D-Man-(1-&gt;2)-alpha-D-Man-(1-&gt;3)-[alpha-D-Man-(1-&gt;2)-alpha-D-Man-(1-&gt;3)-alpha-D-Man-(1-&gt;6)]-beta-D-Man-(1-&gt;4)-beta-D-GlcNAc-(1-&gt;4)-alpha-D-GlcNAc-diphospho-di-trans,poly-cis-dolichol + a di-trans,poly-cis-dolichyl phosphate + H(+). The catalysed reaction is an alpha-D-Man-(1-&gt;2)-alpha-D-Man-(1-&gt;2)-alpha-D-Man-(1-&gt;3)-[alpha-D-Man-(1-&gt;2)-alpha-D-Man-(1-&gt;3)-[alpha-D-Man-(1-&gt;6)]-alpha-D-Man-(1-&gt;6)]-beta-D-Man-(1-&gt;4)-beta-D-GlcNAc-(1-&gt;4)-alpha-D-GlcNAc-diphospho-di-trans,poly-cis-dolichol + a di-trans,poly-cis-dolichyl beta-D-mannosyl phosphate = an alpha-D-Man-(1-&gt;2)-alpha-D-Man-(1-&gt;2)-alpha-D-Man-(1-&gt;3)-[alpha-D-Man-(1-&gt;2)-alpha-D-Man-(1-&gt;3)-[alpha-D-Man-(1-&gt;2)-alpha-D-Man-(1-&gt;6)]-alpha-D-Man-(1-&gt;6)]-beta-D-Man-(1-&gt;4)-beta-D-GlcNAc-(1-&gt;4)-alpha-D-GlcNAc-diphospho-di-trans,poly-cis-dolichol + a di-trans,poly-cis-dolichyl phosphate + H(+). Its pathway is protein modification; protein glycosylation. Its function is as follows. Mannosyltransferase that operates in the biosynthetic pathway of dolichol-linked oligosaccharides, the glycan precursors employed in protein asparagine (N)-glycosylation. The assembly of dolichol-linked oligosaccharides begins on the cytosolic side of the endoplasmic reticulum membrane and finishes in its lumen. The sequential addition of sugars to dolichol pyrophosphate produces dolichol-linked oligosaccharides containing fourteen sugars, including two GlcNAcs, nine mannoses and three glucoses. Once assembled, the oligosaccharide is transferred from the lipid to nascent proteins by oligosaccharyltransferases. In the lumen of the endoplasmic reticulum, catalyzes the addition of the seventh and ninth alpha-1,2-linked mannose residues to Man(6)GlcNAc(2)-PP-dolichol and Man(8)GlcNAc(2)-PP-dolichol respectively. This chain is Alpha-1,2-mannosyltransferase ALG9, found in Mus musculus (Mouse).